A 122-amino-acid chain; its full sequence is Large ribosomal subunit protein uL14 (122 aa).

This sequence belongs to the universal ribosomal protein uL14 family. In terms of assembly, part of the 50S ribosomal subunit. Forms a cluster with proteins L3 and L19. In the 70S ribosome, L14 and L19 interact and together make contacts with the 16S rRNA in bridges B5 and B8.

Its function is as follows. Binds to 23S rRNA. Forms part of two intersubunit bridges in the 70S ribosome. The chain is Large ribosomal subunit protein uL14 from Pseudoalteromonas translucida (strain TAC 125).